The following is a 429-amino-acid chain: Gap junction gamma-2 protein (429 aa).

The Cytoplasmic segment spans residues 1 to 25 (MTNMSWSFLTRLLEEIHNHSTFVGK). The chain crosses the membrane as a helical span at residues 26–46 (VWLTVLVVFRIVLTAVGGESI). Over 47-78 (YSDEQTKFTCNTRQPGCDNVCYDAFAPLSHVR) the chain is Extracellular. The helical transmembrane segment at 79–99 (FWVFQIVVISTPSVMYLGYAV) threads the bilayer. Topologically, residues 100-214 (HRLARASQDE…EGLMRVYVAQ (115 aa)) are cytoplasmic. The segment at 106 to 200 (SQDERRRASR…GPAGQHDGRR (95 aa)) is disordered. Positions 112–123 (RASRRRPSRRAP) are enriched in basic residues. Over residues 124–138 (RPPLPLPPPPHPGWP) the composition is skewed to pro residues. Residues 142 to 173 (DLGEEEPMLGLGEEDEDPGVAEGLGEDEEAED) show a composition bias toward acidic residues. Residues 215 to 235 (LVARAAFEVAFLVGQYLLYGF) form a helical membrane-spanning segment. The Extracellular segment spans residues 236-263 (EVRPFFACSRQPCPHVVDCFVSRPTEKT). The helical transmembrane segment at 264–284 (VFLLVMYVVSCLCLLLNLCEM) threads the bilayer. The Cytoplasmic portion of the chain corresponds to 285–429 (AHLGLGNAQD…SREGKTTVWI (145 aa)). Disordered regions lie at residues 296-316 (VRGRRPLPASPGPMPRPPPCA) and 361-429 (LGDL…TVWI). The span at 303 to 316 (PASPGPMPRPPPCA) shows a compositional bias: pro residues. Residue Ser-366 is modified to Phosphoserine. Over residues 372–395 (LPANARGPPKPGAPASGSGSATSG) the composition is skewed to low complexity.

The protein belongs to the connexin family. Gamma-type subfamily. As to quaternary structure, a connexon is composed of a hexamer of connexins. Interacts with TJP1.

Its subcellular location is the cell membrane. The protein resides in the cell junction. It is found in the gap junction. One gap junction consists of a cluster of closely packed pairs of transmembrane channels, the connexons, through which materials of low MW diffuse from one cell to a neighboring cell. May play a role in myelination in central and peripheral nervous systems. In Bos taurus (Bovine), this protein is Gap junction gamma-2 protein (GJC2).